Reading from the N-terminus, the 385-residue chain is Xanthosine methyltransferase 2 (385 aa).

Position 18 (Y18) interacts with S-adenosyl-L-homocysteine. Positions 21 and 25 each coordinate xanthosine. S-adenosyl-L-homocysteine-binding residues include C62, N67, D101, L102, S140, F141, and C157. Y158 contacts xanthosine. C159 contributes to the S-adenosyl-L-homocysteine binding site. Residues H161 and W162 each coordinate xanthosine. N179, D261, F263, and N264 together coordinate Mg(2+). 3 residues coordinate xanthosine: S329, Y334, and Y369.

This sequence belongs to the methyltransferase superfamily. Type-7 methyltransferase family. Mg(2+) is required as a cofactor. Expressed at low levels in young leaves but not in mature leaves. Barely detectable in fruits (grains).

The enzyme catalyses xanthosine + S-adenosyl-L-methionine = 7-methylxanthosine + S-adenosyl-L-homocysteine. It participates in alkaloid biosynthesis. Functionally, involved in the biosynthesis of caffeine. Specific for xanthosine and could not use xanthosine 5'-monophosphate (XMP) as substrate. Catalyzes the 7-N-methylation activity of xanthosine, but does not have 1-N- or 3-N-methylation activity. This Coffea arabica (Arabian coffee) protein is Xanthosine methyltransferase 2.